A 479-amino-acid chain; its full sequence is Aryl-phospho-beta-D-glucosidase BglA (479 aa).

The active-site Proton donor is the Glu176. Glu377 acts as the Nucleophile in catalysis.

This sequence belongs to the glycosyl hydrolase 1 family.

It catalyses the reaction 6-phospho-beta-D-glucosyl-(1-&gt;4)-D-glucose + H2O = D-glucose 6-phosphate + D-glucose. Catalyzes the hydrolysis of aryl-phospho-beta-D-glucosides such as 4-methylumbelliferyl-phospho-beta-D-glucopyranoside (MUG-P), phosphoarbutin and phosphosalicin. Plays a major role in the utilization of arbutin or salicin as the sole carbon source. BglA and BglH are the major proteins contributing to hydrolysis of MUG-P by extracts of late-exponential-phase or stationary-phase B.subtilis cells. The protein is Aryl-phospho-beta-D-glucosidase BglA (bglA) of Bacillus subtilis (strain 168).